We begin with the raw amino-acid sequence, 647 residues long: Zinc transporter ZIP4 (647 aa).

A signal peptide spans 1 to 22 (MASLVSLELGLLLAVLVVTATA). Over 23 to 327 (SPPAGLLSLL…QDQLSQSERY (305 aa)) the chain is Extracellular. Disulfide bonds link Cys-57-Cys-62, Cys-65-Cys-111, and Cys-160-Cys-195. The tract at residues 236–255 (EAHSDHSHRHRGASSRDPVP) is disordered. N-linked (GlcNAc...) asparagine glycosylation is present at Asn-261. Cys-270 and Cys-309 form a disulfide bridge. Residues 328-348 (LYGSLATLLICLCAVFGLLLL) traverse the membrane as a helical segment. Residues 349-359 (TCTGCRGVTHY) are Cytoplasmic-facing. Residues 360-380 (ILQTFLSLAVGAVTGDAVLHL) traverse the membrane as a helical segment. At 381–402 (TPKVLGLHTHSEEGLSPQPTWR) the chain is on the extracellular side. The helical transmembrane segment at 403 to 423 (LLAMLAGLYAFFLFENLFNLL) threads the bilayer. The Cytoplasmic segment spans residues 424–498 (LPRDPEDLED…LSPELRLLPY (75 aa)). The Essential for SLC39A4 endocytosis signature appears at 452-454 (LQL). Residues 458 to 484 (ELRQPKPPHEGSRADLVAEESPELLNP) form a disordered region. A compositionally biased stretch (basic and acidic residues) spans 460 to 470 (RQPKPPHEGSR). Residues 499–518 (MITLGDAVHNFADGLAVGAA) form a helical membrane-spanning segment. Residues His-507, Asn-508, and Asp-511 each contribute to the Zn(2+) site. At 519–526 (FASSWKTG) the chain is on the extracellular side. A helical transmembrane segment spans residues 527–553 (LATSLAVFCHELPHELGDFAALLHAGL). Residues His-536, Glu-537, and His-540 each contribute to the Zn(2+) site. Topologically, residues 554-558 (SVRQA) are cytoplasmic. Residues 559-579 (LLLNLASALTAFAGLYVALAV) form a helical membrane-spanning segment. At 580–586 (GVSEESE) the chain is on the extracellular side. The chain crosses the membrane as a helical span at residues 587–607 (AWILAVATGLFLYVALCDMLP). Residues 608–617 (AMLKVRDPRP) are Cytoplasmic-facing. The helical transmembrane segment at 618–638 (WLLFLLHNVGLLGGWTVLLLL) threads the bilayer. Over 639–647 (SLYEDDITF) the chain is Extracellular.

This sequence belongs to the ZIP transporter (TC 2.A.5) family. Homodimer; homodimerization is mediated by the transmembrane domain. Post-translationally, the extracellular N-terminal ectodomain is cleaved when cells are Zn(2+) deficient, N-terminally cleaved SLC39A4 is internalized at a faster rate. In terms of processing, under excess Zn(2+) conditions, SLC39A4 on the cell surface is rapidly endocytosed, ubiquitinated and degraded. Glycosylated. In terms of tissue distribution, highly expressed in kidney, small intestine, stomach, colon, jejunum and duodenum.

Its subcellular location is the cell membrane. It localises to the recycling endosome membrane. The protein resides in the apical cell membrane. It carries out the reaction Zn(2+)(in) = Zn(2+)(out). With respect to regulation, the Zn(2+) uniporter activity is regulated by zinc availability. Extracellular acidification stimulated SLC39A4-dependent Zn(2+) uptake. Its function is as follows. Selective transporter that mediates the uptake of Zn(2+). Plays an essential role for dietary zinc uptake from small intestine. The Zn(2+) uniporter activity is regulated by zinc availability. Also exhibits polyspecific binding and transport of Cu(2+), Cd(2+) and possibly Ni(2+) but at higher concentrations. The sequence is that of Zinc transporter ZIP4 from Homo sapiens (Human).